We begin with the raw amino-acid sequence, 55 residues long: Large ribosomal subunit protein bL33 (55 aa).

Belongs to the bacterial ribosomal protein bL33 family.

This Burkholderia ambifaria (strain MC40-6) protein is Large ribosomal subunit protein bL33.